The chain runs to 536 residues: CTP synthase (536 aa).

The amidoligase domain stretch occupies residues 1-267; sequence MSKFVFVTGG…CKETLNYLEL (267 aa). A CTP-binding site is contributed by Ser-13. Ser-13 provides a ligand contact to UTP. ATP is bound by residues 14–19 and Asp-71; that span reads SIGKGI. Mg(2+) is bound by residues Asp-71 and Glu-141. Residues 148–150, 188–193, and Lys-224 contribute to the CTP site; these read DIE and KTKPTQ. Residues 188–193 and Lys-224 each bind UTP; that span reads KTKPTQ. Residues 292–534 enclose the Glutamine amidotransferase type-1 domain; sequence KVALVGKYIE…IKASQDKLTQ (243 aa). An L-glutamine-binding site is contributed by Gly-354. Catalysis depends on Cys-381, which acts as the Nucleophile; for glutamine hydrolysis. Residues 382–385, Glu-405, and Arg-462 each bind L-glutamine; that span reads LGMQ. Catalysis depends on residues His-507 and Glu-509.

This sequence belongs to the CTP synthase family. In terms of assembly, homotetramer.

The catalysed reaction is UTP + L-glutamine + ATP + H2O = CTP + L-glutamate + ADP + phosphate + 2 H(+). It catalyses the reaction L-glutamine + H2O = L-glutamate + NH4(+). The enzyme catalyses UTP + NH4(+) + ATP = CTP + ADP + phosphate + 2 H(+). It participates in pyrimidine metabolism; CTP biosynthesis via de novo pathway; CTP from UDP: step 2/2. Its activity is regulated as follows. Allosterically activated by GTP, when glutamine is the substrate; GTP has no effect on the reaction when ammonia is the substrate. The allosteric effector GTP functions by stabilizing the protein conformation that binds the tetrahedral intermediate(s) formed during glutamine hydrolysis. Inhibited by the product CTP, via allosteric rather than competitive inhibition. Catalyzes the ATP-dependent amination of UTP to CTP with either L-glutamine or ammonia as the source of nitrogen. Regulates intracellular CTP levels through interactions with the four ribonucleotide triphosphates. In Prochlorococcus marinus (strain MIT 9301), this protein is CTP synthase.